Reading from the N-terminus, the 343-residue chain is Heat-inducible transcription repressor HrcA (343 aa).

The protein belongs to the HrcA family.

Its function is as follows. Negative regulator of class I heat shock genes (grpE-dnaK-dnaJ and groELS operons). Prevents heat-shock induction of these operons. This is Heat-inducible transcription repressor HrcA from Bacillus cytotoxicus (strain DSM 22905 / CIP 110041 / 391-98 / NVH 391-98).